The sequence spans 200 residues: dITP/XTP pyrophosphatase (200 aa).

Position 8-13 (8-13 (TGNQGK)) interacts with substrate. The active-site Proton acceptor is the aspartate 69. Aspartate 69 lines the Mg(2+) pocket. Substrate-binding positions include serine 70, 154–157 (FGYD), lysine 177, and 182–183 (HR).

The protein belongs to the HAM1 NTPase family. As to quaternary structure, homodimer. Mg(2+) serves as cofactor.

The catalysed reaction is XTP + H2O = XMP + diphosphate + H(+). The enzyme catalyses dITP + H2O = dIMP + diphosphate + H(+). It carries out the reaction ITP + H2O = IMP + diphosphate + H(+). Its function is as follows. Pyrophosphatase that catalyzes the hydrolysis of nucleoside triphosphates to their monophosphate derivatives, with a high preference for the non-canonical purine nucleotides XTP (xanthosine triphosphate), dITP (deoxyinosine triphosphate) and ITP. Seems to function as a house-cleaning enzyme that removes non-canonical purine nucleotides from the nucleotide pool, thus preventing their incorporation into DNA/RNA and avoiding chromosomal lesions. The chain is dITP/XTP pyrophosphatase from Vibrio parahaemolyticus serotype O3:K6 (strain RIMD 2210633).